The primary structure comprises 311 residues: ATP synthase gamma chain (311 aa).

Residues Cys-67 and Cys-138 are joined by a disulfide bond.

Belongs to the ATPase gamma chain family. As to quaternary structure, F-type ATPases have 2 components, CF(1) - the catalytic core - and CF(0) - the membrane proton channel. CF(1) has five subunits: alpha(3), beta(3), gamma(1), delta(1), epsilon(1). CF(0) has three main subunits: a, b and c.

The protein resides in the cellular thylakoid membrane. Its activity is regulated as follows. Thiol-modulation by raising the activation threshold of the enzyme upon oxidation of the cysteines, thereby preventing wasteful ATP-hydrolysis. Its function is as follows. Produces ATP from ADP in the presence of a proton gradient across the membrane. The gamma chain is believed to be important in regulating ATPase activity and the flow of protons through the CF(0) complex. The polypeptide is ATP synthase gamma chain (atpG) (Arthrospira platensis (Spirulina platensis)).